Here is a 216-residue protein sequence, read N- to C-terminus: NADH-quinone oxidoreductase subunit C (216 aa).

It belongs to the complex I 30 kDa subunit family. As to quaternary structure, NDH-1 is composed of 14 different subunits. Subunits NuoB, C, D, E, F, and G constitute the peripheral sector of the complex.

Its subcellular location is the cell inner membrane. It carries out the reaction a quinone + NADH + 5 H(+)(in) = a quinol + NAD(+) + 4 H(+)(out). Functionally, NDH-1 shuttles electrons from NADH, via FMN and iron-sulfur (Fe-S) centers, to quinones in the respiratory chain. The immediate electron acceptor for the enzyme in this species is believed to be ubiquinone. Couples the redox reaction to proton translocation (for every two electrons transferred, four hydrogen ions are translocated across the cytoplasmic membrane), and thus conserves the redox energy in a proton gradient. This chain is NADH-quinone oxidoreductase subunit C, found in Francisella tularensis subsp. tularensis (strain FSC 198).